A 532-amino-acid chain; its full sequence is FRIGIDA-like protein 4b (532 aa).

The protein belongs to the Frigida family. As to expression, expressed in leaves, shoot apex, flowers and during seed development.

The sequence is that of FRIGIDA-like protein 4b (FRL4B) from Arabidopsis thaliana (Mouse-ear cress).